The primary structure comprises 873 residues: MKKTTEIRNIFLNFFYEKKHKIMDSSTLIPDNDKTLLFTNSGMNQFKDIFLGFKKPKYIRVATAQRCIRVGGKHNDLNMIGKTNRHHTFFEMLGNFSFGSYFKSDTIQFAWELLTSKKWFDLSKEKLIVTIYYKDIESYNLWVEKTNINPKNIIFIKDKNNILYNSDNFWTMGDTGPCGPCSEIFYFFGKSINYKNIKIYDEEYIEIWNLVFMQFNLHLNGKLSRLPITSIDTGMGLERISCVLQKVNSNYSIDLFKKLIYEISKIIEIKNIKNYSLRIIADHIRSAIFLIYDGVIPSKEGRGYVLRRIIRRAIFHGNYILNKSCFFYKLVSPAINIMSYIDSKIIKKKKEIENIIKEEEKIFFFSIKKGMIFLNKNLKKIKNNILKGEIAFKLHDTFGFPIDLTNDICIKNKINVDEKGFFHAMNEQKNKSYKNSCFNKFNLKLLNNYCTKFCGYSYLKCESQILNIYNLKEEIKEIKENQEGIIILDKTPFYGESGGQVGDSGEIKSKDGVFSVIDTKKLGNYFYHYGKVIQGILKINNKITAYVNKIKRNKISLNHSSTHLLHYAINCLLDKNIIQKGSLICEKYLSFDFSYGKKINIEKINEIENIINEKIRDNVIIHSNNMDLKNALKIGAKALFKNKYKDLVRVLNIGDFSIELCGGTHANRTGDIGCFVITNFSKISSDTYRIKAITGETAIAFIQKKFNDINTISSLIKSNSNEIVNKIEKITENLKILEKKNKNLKNKIIKNYIKLIFNKIKKINNFEIIMDYFNEEIDKIILREILNKVKTNLKNGIVILASIKKDNLYIVTGVTNNLVNIITAKEIISYFKEIKSIKGGGNSYFAEAVGVVNLIDLKSMFKKIFMILSKNLK.

Zn(2+) is bound by residues His559, His563, Cys661, and His665.

This sequence belongs to the class-II aminoacyl-tRNA synthetase family. In terms of assembly, homotetramer. The cofactor is Zn(2+).

The protein resides in the cytoplasm. It catalyses the reaction tRNA(Ala) + L-alanine + ATP = L-alanyl-tRNA(Ala) + AMP + diphosphate. In terms of biological role, catalyzes the attachment of alanine to tRNA(Ala) in a two-step reaction: alanine is first activated by ATP to form Ala-AMP and then transferred to the acceptor end of tRNA(Ala). Also edits incorrectly charged Ser-tRNA(Ala) and Gly-tRNA(Ala) via its editing domain. This is Alanine--tRNA ligase from Wigglesworthia glossinidia brevipalpis.